The primary structure comprises 180 residues: Molybdopterin synthase catalytic subunit (180 aa).

Positions 1–10 (MSSTTPTTEP) are enriched in polar residues. The segment at 1-31 (MSSTTPTTEPDQLPPHLDPQTYPRTTTNPTL) is disordered. The segment covering 21–31 (TYPRTTTNPTL) has biased composition (low complexity). Substrate contacts are provided by residues 131 to 132 (HR), Lys147, and 154 to 156 (KKE).

It belongs to the MoaE family. MOCS2B subfamily. In terms of assembly, heterotetramer; composed of 2 small (MOCS2A) and 2 large (MOCS2B) subunits.

The protein resides in the cytoplasm. It carries out the reaction 2 [molybdopterin-synthase sulfur-carrier protein]-C-terminal-Gly-aminoethanethioate + cyclic pyranopterin phosphate + H2O = molybdopterin + 2 [molybdopterin-synthase sulfur-carrier protein]-C-terminal Gly-Gly + 2 H(+). The protein operates within cofactor biosynthesis; molybdopterin biosynthesis. Functionally, catalytic subunit of the molybdopterin synthase complex, a complex that catalyzes the conversion of precursor Z into molybdopterin. Acts by mediating the incorporation of 2 sulfur atoms from thiocarboxylated MOCS2A into precursor Z to generate a dithiolene group. This Aspergillus niger (strain ATCC MYA-4892 / CBS 513.88 / FGSC A1513) protein is Molybdopterin synthase catalytic subunit.